The sequence spans 635 residues: MINISLSDGSVRQFEKGMTIYEVANAISMSLAKQAIVAEINGELKDLSTVIENNCKLRILTAKDPECLEIIRHDAAHLTAEAVKELFPETQVTIGPAIENGYYYDFARDKPFTVDDLAVIEAKMQELAKKNEKVTRELWNRDKAIEFFRSIGEHYKAEIIASIPTDEPITLYRQGNFIDLCRGPHAPSTGFVKYFKLMKVAGSYWRGDSRNQVLQRIYGTAWATKEQLDHYLFMLEEAEKRDHRKLGRELDLFHFQEEAQGMVFWHDKGWSIYNIVEQYIRKKIRKNGYTEVKTPVLVDKRLWEASGHWEKFRDNMFALEADNKILALKPMNCPCHVQIFKQGIKSYRDLPLRMSEFGLCHRNEASGALHGLMRVRSLVQDDAHIFCAEEQITDETVSFCKLLTEVYKDFGFTDIKVKFSDRPEIRAGSDEVWDKAENALKEAVEKAGFTYTLNPGEGAFYGPKLEFVLTDAIGRQWQCGTLQMDFVLLEQLDASYVAASGEKKRPVMLHRAILGSLERFIGILIEEYAGCFPLWLAPVQVAIATITSDLNDYALAVQKALIDNGVRTDINISPDKINYKIREFSNHKVPLIAIIGKKEKENKQVTIRRLGTTDQQVLSVKQLITLISEENSKYL.

One can recognise a TGS domain in the interval 1–61 (MINISLSDGS…ENNCKLRILT (61 aa)). The tract at residues 242 to 533 (DHRKLGRELD…LIEEYAGCFP (292 aa)) is catalytic. Cys-333, His-384, and His-510 together coordinate Zn(2+).

This sequence belongs to the class-II aminoacyl-tRNA synthetase family. Homodimer. It depends on Zn(2+) as a cofactor.

It localises to the cytoplasm. It carries out the reaction tRNA(Thr) + L-threonine + ATP = L-threonyl-tRNA(Thr) + AMP + diphosphate + H(+). Catalyzes the attachment of threonine to tRNA(Thr) in a two-step reaction: L-threonine is first activated by ATP to form Thr-AMP and then transferred to the acceptor end of tRNA(Thr). Also edits incorrectly charged L-seryl-tRNA(Thr). The protein is Threonine--tRNA ligase of Rickettsia canadensis (strain McKiel).